Reading from the N-terminus, the 125-residue chain is Small ribosomal subunit protein uS13 (125 aa).

Residues 99–125 are disordered; the sequence is RGQRTKTNARTRKGKRKTVANKKMAAK.

The protein belongs to the universal ribosomal protein uS13 family. Part of the 30S ribosomal subunit. Forms a loose heterodimer with protein S19. Forms two bridges to the 50S subunit in the 70S ribosome.

Located at the top of the head of the 30S subunit, it contacts several helices of the 16S rRNA. In the 70S ribosome it contacts the 23S rRNA (bridge B1a) and protein L5 of the 50S subunit (bridge B1b), connecting the 2 subunits; these bridges are implicated in subunit movement. Contacts the tRNAs in the A and P-sites. In Borrelia turicatae (strain 91E135), this protein is Small ribosomal subunit protein uS13.